A 461-amino-acid chain; its full sequence is Mannose-6-phosphate isomerase (461 aa).

Glutamine 107, histidine 109, glutamate 134, and histidine 291 together coordinate Zn(2+). Residue arginine 310 is part of the active site.

It belongs to the mannose-6-phosphate isomerase type 1 family. Requires Zn(2+) as cofactor.

It localises to the cytoplasm. It carries out the reaction D-mannose 6-phosphate = D-fructose 6-phosphate. It functions in the pathway nucleotide-sugar biosynthesis; GDP-alpha-D-mannose biosynthesis; alpha-D-mannose 1-phosphate from D-fructose 6-phosphate: step 1/2. In terms of biological role, involved in the synthesis of the GDP-mannose and dolichol-phosphate-mannose required for a number of critical mannosyl transfer reactions. This chain is Mannose-6-phosphate isomerase (manA), found in Emericella nidulans (strain FGSC A4 / ATCC 38163 / CBS 112.46 / NRRL 194 / M139) (Aspergillus nidulans).